Reading from the N-terminus, the 235-residue chain is 5'-methylthioadenosine/S-adenosylhomocysteine nucleosidase (235 aa).

Glu12 (proton acceptor) is an active-site residue. Residues Gly78, Ile152, and 173 to 174 (ME) each bind substrate. Asp197 functions as the Proton donor in the catalytic mechanism.

It belongs to the PNP/UDP phosphorylase family. MtnN subfamily. Homodimer.

The enzyme catalyses S-adenosyl-L-homocysteine + H2O = S-(5-deoxy-D-ribos-5-yl)-L-homocysteine + adenine. The catalysed reaction is S-methyl-5'-thioadenosine + H2O = 5-(methylsulfanyl)-D-ribose + adenine. It catalyses the reaction 5'-deoxyadenosine + H2O = 5-deoxy-D-ribose + adenine. It participates in amino-acid biosynthesis; L-methionine biosynthesis via salvage pathway; S-methyl-5-thio-alpha-D-ribose 1-phosphate from S-methyl-5'-thioadenosine (hydrolase route): step 1/2. Its function is as follows. Catalyzes the irreversible cleavage of the glycosidic bond in both 5'-methylthioadenosine (MTA) and S-adenosylhomocysteine (SAH/AdoHcy) to adenine and the corresponding thioribose, 5'-methylthioribose and S-ribosylhomocysteine, respectively. Also cleaves 5'-deoxyadenosine, a toxic by-product of radical S-adenosylmethionine (SAM) enzymes, into 5-deoxyribose and adenine. Thus, is required for in vivo function of the radical SAM enzymes biotin synthase and lipoic acid synthase, that are inhibited by 5'-deoxyadenosine accumulation. In Proteus mirabilis (strain HI4320), this protein is 5'-methylthioadenosine/S-adenosylhomocysteine nucleosidase.